Here is a 186-residue protein sequence, read N- to C-terminus: Peptidyl-tRNA hydrolase (186 aa).

Y13 contributes to the tRNA binding site. The Proton acceptor role is filled by H18. TRNA is bound by residues Y59, N61, and N107.

This sequence belongs to the PTH family. As to quaternary structure, monomer.

The protein resides in the cytoplasm. The enzyme catalyses an N-acyl-L-alpha-aminoacyl-tRNA + H2O = an N-acyl-L-amino acid + a tRNA + H(+). Functionally, hydrolyzes ribosome-free peptidyl-tRNAs (with 1 or more amino acids incorporated), which drop off the ribosome during protein synthesis, or as a result of ribosome stalling. Catalyzes the release of premature peptidyl moieties from peptidyl-tRNA molecules trapped in stalled 50S ribosomal subunits, and thus maintains levels of free tRNAs and 50S ribosomes. The protein is Peptidyl-tRNA hydrolase of Thermotoga maritima (strain ATCC 43589 / DSM 3109 / JCM 10099 / NBRC 100826 / MSB8).